The following is a 391-amino-acid chain: 1-deoxy-D-xylulose 5-phosphate reductoisomerase (391 aa).

Thr-11, Gly-12, Ser-13, Ile-14, Gly-37, Asn-39, and Asn-125 together coordinate NADPH. Lys-126 contributes to the 1-deoxy-D-xylulose 5-phosphate binding site. Glu-127 provides a ligand contact to NADPH. Asp-151 lines the Mn(2+) pocket. 4 residues coordinate 1-deoxy-D-xylulose 5-phosphate: Ser-152, Glu-153, Ser-176, and His-199. Mn(2+) is bound at residue Glu-153. Position 205 (Gly-205) interacts with NADPH. 1-deoxy-D-xylulose 5-phosphate contacts are provided by Ser-212, Asn-217, Lys-218, and Glu-221. A Mn(2+)-binding site is contributed by Glu-221.

Belongs to the DXR family. Requires Mg(2+) as cofactor. The cofactor is Mn(2+).

The enzyme catalyses 2-C-methyl-D-erythritol 4-phosphate + NADP(+) = 1-deoxy-D-xylulose 5-phosphate + NADPH + H(+). It participates in isoprenoid biosynthesis; isopentenyl diphosphate biosynthesis via DXP pathway; isopentenyl diphosphate from 1-deoxy-D-xylulose 5-phosphate: step 1/6. Catalyzes the NADPH-dependent rearrangement and reduction of 1-deoxy-D-xylulose-5-phosphate (DXP) to 2-C-methyl-D-erythritol 4-phosphate (MEP). In Heliobacterium modesticaldum (strain ATCC 51547 / Ice1), this protein is 1-deoxy-D-xylulose 5-phosphate reductoisomerase.